A 118-amino-acid chain; its full sequence is Large ribosomal subunit protein bL20 (118 aa).

The protein belongs to the bacterial ribosomal protein bL20 family.

Functionally, binds directly to 23S ribosomal RNA and is necessary for the in vitro assembly process of the 50S ribosomal subunit. It is not involved in the protein synthesizing functions of that subunit. The sequence is that of Large ribosomal subunit protein bL20 from Sodalis glossinidius (strain morsitans).